Reading from the N-terminus, the 350-residue chain is Spermidine/putrescine import ATP-binding protein PotA (350 aa).

An ABC transporter domain is found at 6 to 236; that stretch reads LELRNVTKDY…PENLWVAKFI (231 aa). 38-45 contacts ATP; the sequence is GPSGCGKT.

It belongs to the ABC transporter superfamily. Spermidine/putrescine importer (TC 3.A.1.11.1) family. The complex is composed of two ATP-binding proteins (PotA), two transmembrane proteins (PotB and PotC) and a solute-binding protein (PotD).

It is found in the cell membrane. It catalyses the reaction ATP + H2O + polyamine-[polyamine-binding protein]Side 1 = ADP + phosphate + polyamineSide 2 + [polyamine-binding protein]Side 1.. Part of the ABC transporter complex PotABCD involved in spermidine/putrescine import. Responsible for energy coupling to the transport system. The chain is Spermidine/putrescine import ATP-binding protein PotA from Mesoplasma florum (strain ATCC 33453 / NBRC 100688 / NCTC 11704 / L1) (Acholeplasma florum).